Consider the following 163-residue polypeptide: GTP-dependent dephospho-CoA kinase (163 aa).

GTP is bound by residues D38, V39, D57, E115, and D138.

Belongs to the GTP-dependent DPCK family.

The catalysed reaction is 3'-dephospho-CoA + GTP = GDP + CoA + H(+). The protein operates within cofactor biosynthesis; coenzyme A biosynthesis. Catalyzes the GTP-dependent phosphorylation of the 3'-hydroxyl group of dephosphocoenzyme A to form coenzyme A (CoA). The protein is GTP-dependent dephospho-CoA kinase of Methanothermobacter thermautotrophicus (strain ATCC 29096 / DSM 1053 / JCM 10044 / NBRC 100330 / Delta H) (Methanobacterium thermoautotrophicum).